The sequence spans 204 residues: Large ribosomal subunit protein eL15 (204 aa).

It belongs to the eukaryotic ribosomal protein eL15 family. As to quaternary structure, component of the large ribosomal subunit.

It is found in the cytoplasm. Its function is as follows. Component of the large ribosomal subunit. The ribosome is a large ribonucleoprotein complex responsible for the synthesis of proteins in the cell. The chain is Large ribosomal subunit protein eL15 (rpl15) from Monopterus albus (Swamp eel).